The primary structure comprises 439 residues: Putative myrosinase 3 (439 aa).

Residues 1–19 form the signal peptide; it reads MKFRALGLVLLLAVETCKA. N-linked (GlcNAc...) asparagine glycosylation occurs at Asn33. Residues His145, 190 to 191, and Tyr316 each bind a beta-D-glucoside; that span reads NQ. N-linked (GlcNAc...) asparagine glycosylation occurs at Asn336. Residues Glu386 and Trp404 each coordinate a beta-D-glucoside. Glu386 serves as the catalytic Nucleophile.

The protein belongs to the glycosyl hydrolase 1 family. Expressed specifically in stamens and petals.

It carries out the reaction a thioglucoside + H2O = a sugar + a thiol.. The chain is Putative myrosinase 3 from Arabidopsis thaliana (Mouse-ear cress).